The sequence spans 409 residues: Chaetoglobosin A biosynthesis cluster protein C (409 aa).

Positions 51 to 120 (DLPANSRKLT…VKRQPQLRTR (70 aa)) constitute an HTH CENPB-type domain. The H-T-H motif DNA-binding region spans 84 to 113 (RGVEDMANHLLRERDAPPVGKLWAHNFVKR). Disordered regions lie at residues 243-269 (PTHP…ETRS) and 320-350 (ANEP…QDPL). The span at 255 to 269 (PWASKTPYNAQETRS) shows a compositional bias: polar residues.

The protein resides in the nucleus. In terms of biological role, part of the gene cluster that mediates the biosynthesis of chaetoglobosin A which has a unique inhibitory activity against actin polymerization in mammalian cells. Chaetoglobosin A and its intermediates are involved in the morphological differentiation of C.globosum. The first step of the pathway is the synthesis of prochaetoglobosin I via condensation of one acetyl-CoA, 8 malonyl-CoA, and a L-tryptophan molecule by the PKS-NRPS hybrid synthetase cheA, followed by reduction of backbone double bond to install desired geometry by the enoyl reductase cheB. Further multiple oxidation steps performed by the cytochrome P450 monooxygenases cheE and cheG, as well as by the FAD-linked oxidoreductase cheF, lead to the formation of chaetoglobosin A. Depending on the order of action of these reductases, distinct intermediates can be identified. Within the pathway, the cytochrome P450 monooxygenase cheE catalyzes a stereospecific epoxidation on prochaetoglobosin I, cytoglobosin D, and chaetoglobosin J intermediates. The FAD-linked oxidoreductase cheF performs dehydrogenation of the C-20 hydroxyl groups in the 20-dihyrochaetoglobosin A and cytoglobosin D intermediates. Finally, the cytochrome P450 monooxygenase cheG can catalyze the stereospecific dihydroxylation of prochaetoglobosin I and prochaetoglobosin IV at C-19 and C-20, respectively. The Diels-Alderase cheD may play a role in the post-PKS-NRPS biosynthetic steps catalyzing Diels-Alder cyclization. The protein is Chaetoglobosin A biosynthesis cluster protein C of Chaetomium globosum (strain ATCC 6205 / CBS 148.51 / DSM 1962 / NBRC 6347 / NRRL 1970) (Soil fungus).